Consider the following 235-residue polypeptide: Small ribosomal subunit protein uS3 (235 aa).

The KH type-2 domain maps to 39–107 (VRKFLNKELA…PAQINIAEVK (69 aa)).

This sequence belongs to the universal ribosomal protein uS3 family. Part of the 30S ribosomal subunit. Forms a tight complex with proteins S10 and S14.

Its function is as follows. Binds the lower part of the 30S subunit head. Binds mRNA in the 70S ribosome, positioning it for translation. In Actinobacillus pleuropneumoniae serotype 5b (strain L20), this protein is Small ribosomal subunit protein uS3.